Consider the following 221-residue polypeptide: Extracellular superoxide dismutase [Cu-Zn] (221 aa).

The signal sequence occupies residues 1–19 (MKTRVVLILALSVCIEAAS). Residue asparagine 56 is glycosylated (N-linked (GlcNAc...) asparagine). Cu cation-binding residues include histidine 70, histidine 72, and histidine 87. Residues cysteine 81 and cysteine 170 are joined by a disulfide bond. Zn(2+) is bound by residues histidine 87, histidine 95, histidine 104, and aspartate 107. Histidine 144 serves as a coordination point for Cu cation.

It belongs to the Cu-Zn superoxide dismutase family. It depends on Cu cation as a cofactor. Requires Zn(2+) as cofactor. As to expression, isoform 2 is preferentially expressed in eggs.

The protein resides in the secreted. The protein localises to the extracellular space. It localises to the membrane. The catalysed reaction is 2 superoxide + 2 H(+) = H2O2 + O2. In terms of biological role, protects cells against oxidative stress by converting superoxide radicals to hydrogen peroxide. Oxidative stress is involved in various biological dysfunctions and senescence. This Caenorhabditis elegans protein is Extracellular superoxide dismutase [Cu-Zn] (sod-4).